We begin with the raw amino-acid sequence, 264 residues long: S-adenosylmethionine decarboxylase proenzyme (264 aa).

Residue serine 113 is the Schiff-base intermediate with substrate; via pyruvic acid of the active site. Residue serine 113 is modified to Pyruvic acid (Ser); by autocatalysis. Histidine 118 (proton acceptor; for processing activity) is an active-site residue. Residue cysteine 141 is the Proton donor; for catalytic activity of the active site.

Belongs to the prokaryotic AdoMetDC family. Type 2 subfamily. Heterooctamer of four alpha and four beta chains arranged as a tetramer of alpha/beta heterodimers. Pyruvate is required as a cofactor. Is synthesized initially as an inactive proenzyme. Formation of the active enzyme involves a self-maturation process in which the active site pyruvoyl group is generated from an internal serine residue via an autocatalytic post-translational modification. Two non-identical subunits are generated from the proenzyme in this reaction, and the pyruvate is formed at the N-terminus of the alpha chain, which is derived from the carboxyl end of the proenzyme. The post-translation cleavage follows an unusual pathway, termed non-hydrolytic serinolysis, in which the side chain hydroxyl group of the serine supplies its oxygen atom to form the C-terminus of the beta chain, while the remainder of the serine residue undergoes an oxidative deamination to produce ammonia and the pyruvoyl group blocking the N-terminus of the alpha chain.

The catalysed reaction is S-adenosyl-L-methionine + H(+) = S-adenosyl 3-(methylsulfanyl)propylamine + CO2. It participates in amine and polyamine biosynthesis; S-adenosylmethioninamine biosynthesis; S-adenosylmethioninamine from S-adenosyl-L-methionine: step 1/1. In terms of biological role, catalyzes the decarboxylation of S-adenosylmethionine to S-adenosylmethioninamine (dcAdoMet), the propylamine donor required for the synthesis of the polyamines spermine and spermidine from the diamine putrescine. In Xylella fastidiosa (strain Temecula1 / ATCC 700964), this protein is S-adenosylmethionine decarboxylase proenzyme.